Consider the following 398-residue polypeptide: Mannitol-1-phosphate 5-dehydrogenase (398 aa).

Residue 10 to 21 (AVHFGAGNIGRG) coordinates NAD(+). Residue lysine 221 is part of the active site.

It belongs to the mannitol dehydrogenase family. As to quaternary structure, monomer.

It catalyses the reaction D-mannitol 1-phosphate + NAD(+) = beta-D-fructose 6-phosphate + NADH + H(+). Its function is as follows. Catalyzes the NAD(H)-dependent interconversion of D-fructose 6-phosphate and D-mannitol 1-phosphate in the mannitol metabolic pathway. In Chaetomium globosum (strain ATCC 6205 / CBS 148.51 / DSM 1962 / NBRC 6347 / NRRL 1970) (Soil fungus), this protein is Mannitol-1-phosphate 5-dehydrogenase.